Consider the following 161-residue polypeptide: Phosphopantetheine adenylyltransferase (161 aa).

Thr11 lines the substrate pocket. ATP-binding positions include 11-12 and His19; that span reads TF. Substrate contacts are provided by Lys43, Thr75, and Arg89. ATP is bound by residues 90–92, Glu100, and 125–131; these read GLR and YSFLSSS.

It belongs to the bacterial CoaD family. Homohexamer. Mg(2+) is required as a cofactor.

Its subcellular location is the cytoplasm. The catalysed reaction is (R)-4'-phosphopantetheine + ATP + H(+) = 3'-dephospho-CoA + diphosphate. It participates in cofactor biosynthesis; coenzyme A biosynthesis; CoA from (R)-pantothenate: step 4/5. Its function is as follows. Reversibly transfers an adenylyl group from ATP to 4'-phosphopantetheine, yielding dephospho-CoA (dPCoA) and pyrophosphate. This chain is Phosphopantetheine adenylyltransferase, found in Listeria welshimeri serovar 6b (strain ATCC 35897 / DSM 20650 / CCUG 15529 / CIP 8149 / NCTC 11857 / SLCC 5334 / V8).